A 324-amino-acid polypeptide reads, in one-letter code: Probable acrylyl-CoA reductase AcuI (324 aa).

NADP(+) contacts are provided by residues Tyr-41, 156-159 (SGGV), 178-180 (SGR), Arg-198, Leu-242, Ile-256, Ser-267, and Asn-313.

It belongs to the zinc-containing alcohol dehydrogenase family. Acrylyl-CoA reductase subfamily. In terms of assembly, homodimer.

It localises to the cytoplasm. It catalyses the reaction propanoyl-CoA + NADP(+) = acryloyl-CoA + NADPH + H(+). Functionally, probably catalyzes the NADPH-dependent reduction of acrylyl-CoA to propanoyl-CoA. The polypeptide is Probable acrylyl-CoA reductase AcuI (acuI) (Escherichia coli (strain K12)).